The chain runs to 521 residues: Bifunctional purine biosynthesis protein PurH (521 aa).

The region spanning 1 to 145 is the MGS-like domain; it reads MIKQALISVS…KNHRDVTVIV (145 aa).

The protein belongs to the PurH family.

The catalysed reaction is (6R)-10-formyltetrahydrofolate + 5-amino-1-(5-phospho-beta-D-ribosyl)imidazole-4-carboxamide = 5-formamido-1-(5-phospho-D-ribosyl)imidazole-4-carboxamide + (6S)-5,6,7,8-tetrahydrofolate. The enzyme catalyses IMP + H2O = 5-formamido-1-(5-phospho-D-ribosyl)imidazole-4-carboxamide. It functions in the pathway purine metabolism; IMP biosynthesis via de novo pathway; 5-formamido-1-(5-phospho-D-ribosyl)imidazole-4-carboxamide from 5-amino-1-(5-phospho-D-ribosyl)imidazole-4-carboxamide (10-formyl THF route): step 1/1. It participates in purine metabolism; IMP biosynthesis via de novo pathway; IMP from 5-formamido-1-(5-phospho-D-ribosyl)imidazole-4-carboxamide: step 1/1. The protein is Bifunctional purine biosynthesis protein PurH of Burkholderia multivorans (strain ATCC 17616 / 249).